A 1023-amino-acid chain; its full sequence is Sodium/potassium-transporting ATPase subunit alpha-1 (1023 aa).

The propeptide occupies 1-5 (MAFKV). Over residues 1–11 (MAFKVGRDKYE) the composition is skewed to basic and acidic residues. Residues 1-38 (MAFKVGRDKYEPAAVSEQGDKKGKKGKKDRDMDELKKE) form a disordered region. The Cytoplasmic portion of the chain corresponds to 6–87 (GRDKYEPAAV…NALTPPPTTP (82 aa)). Lys9 is modified (N6-acetyllysine). Tyr10 is modified (phosphotyrosine). Phosphoserine; by PKC is present on Ser16. N6-acetyllysine is present on Lys21. The span at 28-38 (KDRDMDELKKE) shows a compositional bias: basic and acidic residues. Ser40 and Ser47 each carry phosphoserine. The tract at residues 82–84 (PPP) is phosphoinositide-3 kinase binding. Residues 88-108 (EWIKFCRQLFGGFSMLLWIGA) form a helical membrane-spanning segment. The Extracellular segment spans residues 109–131 (ILCFLAYSIQAATEEEPQNDNLY). Residues 132–152 (LGVVLSAVVIITGCFSYYQEA) form a helical membrane-spanning segment. The Cytoplasmic segment spans residues 153–288 (KSSKIMESFK…GGQTPIAAEI (136 aa)). A disordered region spans residues 216–235 (SSLTGESEPQTRSPDFTNEN). Position 228 is a phosphoserine (Ser228). Tyr260 is modified (phosphotyrosine). Residues 289–308 (EHFIHIITGVAVFLGVSFFI) form a helical membrane-spanning segment. Over 309-320 (LSLILEYTWLEA) the chain is Extracellular. A helical membrane pass occupies residues 321-338 (VIFLIGIIVANVPEGLLA). At 339–772 (TVTVCLTLTA…EEGRLIFDNL (434 aa)) the chain is on the cytoplasmic side. Asp376 serves as the catalytic 4-aspartylphosphate intermediate. Residues Ser452 and Ser484 each carry the phosphoserine modification. Lys487 lines the ATP pocket. A Phosphotyrosine modification is found at Tyr542. The tract at residues 596–717 (RAAVPDAVGK…QGAIVAVTGD (122 aa)) is mediates interaction with SCN7A. At Lys661 the chain carries N6-succinyllysine. Phosphoserine is present on residues Ser668 and Ser675. The Mg(2+) site is built by Asp717 and Asp721. The helical transmembrane segment at 773–792 (KKSIAYTLTSNIPEITPFLI) threads the bilayer. Residues 793-802 (FIIANIPLPL) lie on the Extracellular side of the membrane. The chain crosses the membrane as a helical span at residues 803 to 823 (GTVTILCIDLGTDMVPAISLA). Residues 824 to 843 (YEQAESDIMKRQPRNPKTDK) are Cytoplasmic-facing. A helical transmembrane segment spans residues 844–866 (LVNERLISTAYGQIGMIQALGGF). The Extracellular segment spans residues 867 to 918 (FTYFVILAENGFLPLHLLGLRVDWDDRWINDVEDSYGQQWTYEQRKIVEFTC). A helical transmembrane segment spans residues 919-938 (HTAFFVSIVVVQWADLVICK). Topologically, residues 939-951 (TRRNSVFQQGMKN) are cytoplasmic. Ser943 is subject to Phosphoserine; by PKA. A helical transmembrane segment spans residues 952–970 (KILIFGLFEETALAAFLSY). Over 971–985 (CPGMGVALRMYPLKP) the chain is Extracellular. The helical transmembrane segment at 986–1006 (TWWFCAFPYSLLIFVYDEVRK) threads the bilayer. The Cytoplasmic segment spans residues 1007–1023 (LIIRRRPGGWVEKETYY).

The protein belongs to the cation transport ATPase (P-type) (TC 3.A.3) family. Type IIC subfamily. As to quaternary structure, the sodium/potassium-transporting ATPase is composed of a catalytic alpha subunit, an auxiliary non-catalytic beta subunit and an additional regulatory subunit. Interacts with regulatory subunit FXYD1. Interacts with regulatory subunit FXYD3. Interacts with SIK1. Interacts with SLC35G1 and STIM1. Interacts with CLN3; this interaction regulates the sodium/potassium-transporting ATPase complex localization at the plasma membrane. Interacts with SCN7A; activates ATP1A1 P-type sodium:potassium-exchanging transporter activity which indirectly signals to nearby neurons to regulate sodium homeostasis. In terms of processing, phosphorylation on Tyr-10 modulates pumping activity. Phosphorylation of Ser-943 by PKA modulates the response of ATP1A1 to PKC. Dephosphorylation by protein phosphatase 2A (PP2A) following increases in intracellular sodium, leading to increase catalytic activity.

It localises to the cell membrane. The protein resides in the basolateral cell membrane. It is found in the sarcolemma. The protein localises to the cell projection. Its subcellular location is the axon. It localises to the melanosome. The catalysed reaction is K(+)(out) + Na(+)(in) + ATP + H2O = K(+)(in) + Na(+)(out) + ADP + phosphate + H(+). In terms of biological role, this is the catalytic component of the active enzyme, which catalyzes the hydrolysis of ATP coupled with the exchange of sodium and potassium ions across the plasma membrane. This action creates the electrochemical gradient of sodium and potassium ions, providing the energy for active transport of various nutrients. Could also be part of an osmosensory signaling pathway that senses body-fluid sodium levels and controls salt intake behavior as well as voluntary water intake to regulate sodium homeostasis. The sequence is that of Sodium/potassium-transporting ATPase subunit alpha-1 (ATP1A1) from Pongo abelii (Sumatran orangutan).